We begin with the raw amino-acid sequence, 561 residues long: Putative transport protein AHA_2450 (561 aa).

The next 5 helical transmembrane spans lie at 8–28, 37–57, 66–86, 90–110, and 161–181; these read LLHQ…LLLG, IGNT…GFEF, FMLF…SVFL, IHYI…TVGL, and NMGI…MLVV. 2 RCK C-terminal domains span residues 206 to 291 and 293 to 376; these read SDNE…NYRN and KEVF…KIGF. 5 helical membrane passes run 386–406, 409–429, 450–470, 476–496, and 541–561; these read LVAF…SLVF, LEFG…MGYL, LGLA…ILDH, AVVL…GYLF, and TYAV…GFWF.

It belongs to the AAE transporter (TC 2.A.81) family. YbjL subfamily.

It localises to the cell membrane. The chain is Putative transport protein AHA_2450 from Aeromonas hydrophila subsp. hydrophila (strain ATCC 7966 / DSM 30187 / BCRC 13018 / CCUG 14551 / JCM 1027 / KCTC 2358 / NCIMB 9240 / NCTC 8049).